Reading from the N-terminus, the 285-residue chain is HTH-type transcriptional regulator MurR (285 aa).

The HTH rpiR-type domain occupies 1 to 77 (MLYLTKIRNA…MALIGEYSAS (77 aa)). A DNA-binding region (H-T-H motif) is located at residues 37–56 (SRKMAKQLGISQSSIVKFAQ). One can recognise an SIS domain in the interval 128-268 (IIEVISKAPF…FVGLVQLNDV (141 aa)).

Homotetramer.

Its pathway is amino-sugar metabolism; N-acetylmuramate degradation [regulation]. In terms of biological role, represses the expression of the murPQ operon involved in the uptake and degradation of N-acetylmuramic acid (MurNAc). Binds to two adjacent inverted repeats within the operator region. MurNAc 6-phosphate, the substrate of MurQ, is the specific inducer that weakens binding of MurR to the operator. The protein is HTH-type transcriptional regulator MurR of Escherichia coli O157:H7.